We begin with the raw amino-acid sequence, 143 residues long: WW domain-containing protein C660.05 (143 aa).

The WW domain occupies 9–44; that stretch reads GLPAGWVAQWDPTYQAYFYINETFEGAQPQWEPPIP. Residues 115 to 143 are disordered; sequence HHGPLHGPHGGFGGRGGGRMGGRGGRGRR.

The sequence is that of WW domain-containing protein C660.05 from Schizosaccharomyces pombe (strain 972 / ATCC 24843) (Fission yeast).